The chain runs to 289 residues: Phosphatidylserine decarboxylase proenzyme (289 aa).

Catalysis depends on charge relay system; for autoendoproteolytic cleavage activity residues Asp-92, His-149, and Ser-254. Residue Ser-254 is the Schiff-base intermediate with substrate; via pyruvic acid; for decarboxylase activity of the active site. Residue Ser-254 is modified to Pyruvic acid (Ser); by autocatalysis.

The protein belongs to the phosphatidylserine decarboxylase family. PSD-B subfamily. Prokaryotic type I sub-subfamily. As to quaternary structure, heterodimer of a large membrane-associated beta subunit and a small pyruvoyl-containing alpha subunit. Requires pyruvate as cofactor. Is synthesized initially as an inactive proenzyme. Formation of the active enzyme involves a self-maturation process in which the active site pyruvoyl group is generated from an internal serine residue via an autocatalytic post-translational modification. Two non-identical subunits are generated from the proenzyme in this reaction, and the pyruvate is formed at the N-terminus of the alpha chain, which is derived from the carboxyl end of the proenzyme. The autoendoproteolytic cleavage occurs by a canonical serine protease mechanism, in which the side chain hydroxyl group of the serine supplies its oxygen atom to form the C-terminus of the beta chain, while the remainder of the serine residue undergoes an oxidative deamination to produce ammonia and the pyruvoyl prosthetic group on the alpha chain. During this reaction, the Ser that is part of the protease active site of the proenzyme becomes the pyruvoyl prosthetic group, which constitutes an essential element of the active site of the mature decarboxylase.

The protein localises to the cell membrane. It carries out the reaction a 1,2-diacyl-sn-glycero-3-phospho-L-serine + H(+) = a 1,2-diacyl-sn-glycero-3-phosphoethanolamine + CO2. It functions in the pathway phospholipid metabolism; phosphatidylethanolamine biosynthesis; phosphatidylethanolamine from CDP-diacylglycerol: step 2/2. Functionally, catalyzes the formation of phosphatidylethanolamine (PtdEtn) from phosphatidylserine (PtdSer). The protein is Phosphatidylserine decarboxylase proenzyme of Pseudomonas aeruginosa (strain LESB58).